Here is a 1886-residue protein sequence, read N- to C-terminus: Nuclear pore membrane glycoprotein 210 (1886 aa).

Positions 1–25 (MARASLIQPGLWALLLLQAVGPAVA) are cleaved as a signal peptide. Topologically, residues 26-1805 (AKLNIPKVLL…GASLLSHFLD (1780 aa)) are perinuclear space. 4 N-linked (GlcNAc...) asparagine glycosylation sites follow: N337, N484, N681, and N1039. The region spanning 1078–1151 (FPPFRLIPRK…VQAVDAETGK (74 aa)) is the BIG2 domain. Residues 1806-1828 (SYQVMFFTFFALLAGTAVTIIAY) form a helical membrane-spanning segment. At 1829-1886 (HTVCAPRELASPLALTPHASPQHSPHYLASSPTAFNTLPSDRKASPPSGLWSPAYASH) the chain is on the cytoplasmic side. Residue S1839 is modified to Phosphoserine. T1844 is modified (phosphothreonine). The disordered stretch occupies residues 1866 to 1886 (LPSDRKASPPSGLWSPAYASH). Phosphoserine occurs at positions 1873, 1876, 1880, and 1885.

This sequence belongs to the NUP210 family. In terms of assembly, forms dimers and possibly higher-order oligomers. Post-translationally, N-glycosylated, but not all potential glycosylation sites may be used. Contains high-mannose type oligosaccharides. In terms of processing, phosphorylated at Ser-1880 in mitosis specifically; not phosphorylated in interphase.

The protein localises to the nucleus. The protein resides in the nuclear pore complex. Its subcellular location is the nucleus membrane. It is found in the endoplasmic reticulum membrane. Its function is as follows. Nucleoporin essential for nuclear pore assembly and fusion, nuclear pore spacing, as well as structural integrity. In Rattus norvegicus (Rat), this protein is Nuclear pore membrane glycoprotein 210 (Nup210).